The following is a 492-amino-acid chain: Probable cytochrome P450 513A3 (492 aa).

The chain crosses the membrane as a helical span at residues 1 to 21; the sequence is MTSLTLYLIIFSIILYLFVNR. Residue Cys-437 participates in heme binding.

This sequence belongs to the cytochrome P450 family. Heme is required as a cofactor.

It localises to the membrane. This is Probable cytochrome P450 513A3 (cyp513A3) from Dictyostelium discoideum (Social amoeba).